We begin with the raw amino-acid sequence, 204 residues long: Translation initiation factor 2 subunit beta (204 aa).

The region spanning 146 to 204 (AIEEGKELEVHIESISKKGDGVARIGKYILYVAGTKAGQNVKVRITRISGQVAFTQKIL) is the TRAM domain.

The protein belongs to the eIF-2-beta/eIF-5 family. Heterotrimer composed of an alpha, a beta and a gamma chain.

In terms of biological role, eIF-2 functions in the early steps of protein synthesis by forming a ternary complex with GTP and initiator tRNA. The chain is Translation initiation factor 2 subunit beta from Methanocorpusculum labreanum (strain ATCC 43576 / DSM 4855 / Z).